The chain runs to 261 residues: Indole-3-glycerol phosphate synthase (261 aa).

Belongs to the TrpC family.

It carries out the reaction 1-(2-carboxyphenylamino)-1-deoxy-D-ribulose 5-phosphate + H(+) = (1S,2R)-1-C-(indol-3-yl)glycerol 3-phosphate + CO2 + H2O. Its pathway is amino-acid biosynthesis; L-tryptophan biosynthesis; L-tryptophan from chorismate: step 4/5. This is Indole-3-glycerol phosphate synthase from Burkholderia vietnamiensis (strain G4 / LMG 22486) (Burkholderia cepacia (strain R1808)).